Consider the following 75-residue polypeptide: Conotoxin Vn5.6 (75 aa).

The signal sequence occupies residues 1 to 19 (MLCLPVFIILLLLASPAAP). Positions 20–59 (NPLEKRIQSDLIRAALEDADMKTGEREILNIIDSISDVAK) are excised as a propeptide. Pyrrolidone carboxylic acid is present on Q60.

This sequence belongs to the conotoxin T superfamily. Contains 2 disulfide bonds that can be either 'C1-C3, C2-C4' or 'C1-C4, C2-C3', since these disulfide connectivities have been observed for conotoxins with cysteine framework V (for examples, see AC P0DQQ7 and AC P81755). In terms of tissue distribution, expressed by the venom duct.

Its subcellular location is the secreted. This is Conotoxin Vn5.6 from Conus ventricosus (Mediterranean cone).